The chain runs to 376 residues: 28S rRNA (uridine-N(3))-methyltransferase (376 aa).

Disordered stretches follow at residues Met1 to Lys33 and Ala49 to Arg71. Over residues His15–Lys33 the composition is skewed to basic and acidic residues. Thr289, Arg292, Gly312, Asn341, and Thr342 together coordinate S-adenosyl-L-homocysteine. Residues Arg292, Gly312, Asn341, and Thr342 each coordinate S-adenosyl-L-methionine.

This sequence belongs to the class IV-like SAM-binding methyltransferase superfamily. In terms of assembly, interacts with INCA1.

The protein localises to the cytoplasm. It localises to the cytoskeleton. It is found in the spindle. The protein resides in the chromosome. Its subcellular location is the centromere. The protein localises to the kinetochore. It localises to the microtubule organizing center. It is found in the centrosome. The enzyme catalyses uridine in 28S rRNA + S-adenosyl-L-methionine = N(3)-methyluridine in 28S rRNA + S-adenosyl-L-homocysteine + H(+). Functionally, S-adenosyl-L-methionine-dependent methyltransferase that specifically methylates the N3 position of a uridine in 28S rRNA. Required for association of the centrosomes with the poles of the bipolar mitotic spindle during metaphase. Also involved in chromosome alignment. May promote centrosome maturation probably by recruiting A-kinase anchor protein AKAP9 to centrosomes in early mitosis. Binds specifically to miRNA MIR145 hairpin, regulates MIR145 expression at a postranscriptional level. The chain is 28S rRNA (uridine-N(3))-methyltransferase from Homo sapiens (Human).